We begin with the raw amino-acid sequence, 800 residues long: Transducin beta-like protein 3 (800 aa).

N-acetylalanine is present on A2. 13 WD repeats span residues 64–105 (EDQE…RLWK), 107–146 (IHTA…GTHH), 149–190 (GSPG…CLAV), 193–232 (AHYS…ATRT), 245–284 (LPEE…CVHA), 290–329 (GPGR…LRKQ), 332–372 (GYSE…CQIL), 374–413 (GHTD…EVAC), 419–459 (GHTH…LSKG), 477–516 (CHDK…LLGT), 519–560 (GHRR…KTFE), 562–602 (HDAS…RTLD), and 604–642 (HEDK…EQAE). The residue at position 257 (S257) is a Phosphoserine. Residue K407 forms a Glycyl lysine isopeptide (Lys-Gly) (interchain with G-Cter in SUMO2) linkage.

Part of the small subunit (SSU) processome, composed of more than 70 proteins and the RNA chaperone small nucleolar RNA (snoRNA) U3.

The protein resides in the nucleus. The protein localises to the nucleolus. In terms of biological role, part of the small subunit (SSU) processome, first precursor of the small eukaryotic ribosomal subunit. During the assembly of the SSU processome in the nucleolus, many ribosome biogenesis factors, an RNA chaperone and ribosomal proteins associate with the nascent pre-rRNA and work in concert to generate RNA folding, modifications, rearrangements and cleavage as well as targeted degradation of pre-ribosomal RNA by the RNA exosome. This Bos taurus (Bovine) protein is Transducin beta-like protein 3 (TBL3).